A 241-amino-acid polypeptide reads, in one-letter code: MISVRRGLSQLWYWGKRGVIGIIALWMAGILIFAFLPVPFSMVMIERQLGAWLTGDFAYVAHSDWVPMDEISPYMALAVMAAEDQKFPDHWGFDVGAIESALSHNQRNQKRIRGASTLSQQTAKNVFLWDGRSWVRKGLEVGLTAGIELIWTKRRILTVYLNIAEFGNGIFGVEAAARHFFNKPASKLSASEAALLAAVLPNPLRFKVNAPSGYVISRQQWILRQMHQLGGKTFLQENTLD.

A helical membrane pass occupies residues 18 to 38 (GVIGIIALWMAGILIFAFLPV).

Belongs to the glycosyltransferase 51 family.

It is found in the cell inner membrane. The enzyme catalyses [GlcNAc-(1-&gt;4)-Mur2Ac(oyl-L-Ala-gamma-D-Glu-L-Lys-D-Ala-D-Ala)](n)-di-trans,octa-cis-undecaprenyl diphosphate + beta-D-GlcNAc-(1-&gt;4)-Mur2Ac(oyl-L-Ala-gamma-D-Glu-L-Lys-D-Ala-D-Ala)-di-trans,octa-cis-undecaprenyl diphosphate = [GlcNAc-(1-&gt;4)-Mur2Ac(oyl-L-Ala-gamma-D-Glu-L-Lys-D-Ala-D-Ala)](n+1)-di-trans,octa-cis-undecaprenyl diphosphate + di-trans,octa-cis-undecaprenyl diphosphate + H(+). It participates in cell wall biogenesis; peptidoglycan biosynthesis. Functionally, peptidoglycan polymerase that catalyzes glycan chain elongation from lipid-linked precursors. The protein is Biosynthetic peptidoglycan transglycosylase of Yersinia pseudotuberculosis serotype IB (strain PB1/+).